Consider the following 340-residue polypeptide: Biotin synthase (340 aa).

Positions Ser53–Arg280 constitute a Radical SAM core domain. [4Fe-4S] cluster is bound by residues Cys68, Cys72, and Cys75. The [2Fe-2S] cluster site is built by Cys112, Cys143, Cys203, and Arg275.

Belongs to the radical SAM superfamily. Biotin synthase family. In terms of assembly, homodimer. It depends on [4Fe-4S] cluster as a cofactor. Requires [2Fe-2S] cluster as cofactor.

It carries out the reaction (4R,5S)-dethiobiotin + (sulfur carrier)-SH + 2 reduced [2Fe-2S]-[ferredoxin] + 2 S-adenosyl-L-methionine = (sulfur carrier)-H + biotin + 2 5'-deoxyadenosine + 2 L-methionine + 2 oxidized [2Fe-2S]-[ferredoxin]. It participates in cofactor biosynthesis; biotin biosynthesis; biotin from 7,8-diaminononanoate: step 2/2. Catalyzes the conversion of dethiobiotin (DTB) to biotin by the insertion of a sulfur atom into dethiobiotin via a radical-based mechanism. This Bordetella petrii (strain ATCC BAA-461 / DSM 12804 / CCUG 43448) protein is Biotin synthase.